A 231-amino-acid polypeptide reads, in one-letter code: MAATLLDVCAVVPAAGFGRRMQTECPKQYLSIGNKTILEHSVHALLAHPRVTRVVIAISPGDSRFAELPLAQHPQVTVVDGGDERADSVLAGLRAAGDAQWVLVHDAARPCLHQDDLARLLSLSETSRTGGILAAPVRDTMKRAEPGKAAIAHTVERTDLWHALTPQFFPRELLHDCLSRALNEGATITDEASALEYCGFHPQLVEGRADNIKVTRPEDLALAEFYLTRTI.

This sequence belongs to the IspD/TarI cytidylyltransferase family. IspD subfamily. In terms of assembly, homodimer.

The enzyme catalyses 2-C-methyl-D-erythritol 4-phosphate + CTP + H(+) = 4-CDP-2-C-methyl-D-erythritol + diphosphate. It participates in isoprenoid biosynthesis; isopentenyl diphosphate biosynthesis via DXP pathway; isopentenyl diphosphate from 1-deoxy-D-xylulose 5-phosphate: step 2/6. In terms of biological role, catalyzes the formation of 4-diphosphocytidyl-2-C-methyl-D-erythritol from CTP and 2-C-methyl-D-erythritol 4-phosphate (MEP). This is 2-C-methyl-D-erythritol 4-phosphate cytidylyltransferase from Citrobacter koseri (strain ATCC BAA-895 / CDC 4225-83 / SGSC4696).